A 6857-amino-acid chain; its full sequence is Replicase polyprotein 1ab (6857 aa).

The 182-residue stretch at 1679-1860 (FEQYYEFKIG…QYNQAFAVIK (182 aa)) folds into the Macro domain. The disordered stretch occupies residues 2158-2191 (QVGQGGQQDGQVDQQIKESEQVVEPSAPSGQESP). Transmembrane regions (helical) follow at residues 2303–2323 (LTYN…FGVL), 2330–2350 (TPFY…LMIW), 2385–2405 (LVQW…DYVV), 2535–2555 (LFYS…YVLF), 2639–2659 (VTVS…VVVL), 2664–2684 (FIWF…IILF), 2889–2909 (TTLV…LMVG), 3057–3077 (IISP…FLIL), 3106–3126 (VLFV…LALW), and 3142–3162 (LFIL…GFVF). The tract at residues 2303 to 2683 (LTYNIKFKLI…VMMPVFVIIL (381 aa)) is HD1. An HD2 region spans residues 2889 to 3162 (TTLVIVMGVL…FLFMVGGFVF (274 aa)). Residues H3304, E3347, and S3416 each act as charge relay system; for 3C-like serine proteinase activity in the active site. The segment at 3555 to 3738 (HLHFIFSIYF…IVIVLSFRVF (184 aa)) is HD3. The next 7 helical transmembrane spans lie at 3556–3575 (LHFI…YWWL), 3580–3602 (SVVL…NVLF), 3611–3631 (LAVT…LGFL), 3640–3660 (SLII…VVNV), 3663–3683 (AIFV…LGIV), 3698–3718 (AVFT…LLLF), and 3723–3738 (LMSF…FRVF). The region spanning 4566–4797 (DFKLLRGAWS…ANEMEIPTDY (232 aa)) is the NiRAN domain. Residues 5105–5256 (FDVFGSDYTK…FSKPEALKIF (152 aa)) form the RdRp catalytic domain. The CV ZBD domain maps to 5413–5528 (FDKVCFCCPN…NGVAQLLTSV (116 aa)). Residues C5417, C5420, C5428, C5431, C5438, C5441, H5445, H5451, C5460, C5462, C5483, and C5486 each contribute to the Zn(2+) site. In terms of domain architecture, (+)RNA virus helicase ATP-binding spans 5633–5812 (NQPWRLATCF…LQLATQKRYL (180 aa)). A (+)RNA virus helicase C-terminal domain is found at 5813-5972 (TACYRCPPQI…FGMEKQSDFN (160 aa)). Positions 5970-6183 (DFNIIPEVSS…YLASYEAAFK (214 aa)) constitute an ExoN domain. Residues D5984, E5986, and D6085 contribute to the active site. Residues H6149, C6153, and H6157 each coordinate Zn(2+). Residues H6161 and D6166 contribute to the active site. Zn(2+) is bound at residue C6172. The NendoU domain occupies 6451-6591 (LPDTLFSTGR…GEDDIQTFYP (141 aa)). Residues H6487, H6504, K6536, K6633, D6709, K6737, and E6771 contribute to the active site. The region spanning 6593 to 6857 (KDFVRSYYEW…EVPMLCQMEH (265 aa)) is the Nidovirus-type SAM-dependent 2'-O-MTase domain.

In terms of processing, specific enzymatic cleavages in vivo by its own protease yield mature proteins. 3CL-PRO is autocatalytically processed.

The protein localises to the host membrane. The enzyme catalyses RNA(n) + a ribonucleoside 5'-triphosphate = RNA(n+1) + diphosphate. The catalysed reaction is ATP + H2O = ADP + phosphate + H(+). The 3C-like serine proteinase is responsible for the majority of cleavages. Functionally, the helicase which contains a zinc finger structure displays RNA and DNA duplex-unwinding activities with 5' to 3' polarity. Its function is as follows. Acts on both ssRNA and dsRNA in a 3' to 5' direction. In terms of biological role, nendoU is a Mn(2+)-dependent, uridylate-specific enzyme, which leaves 2'-3'-cyclic phosphates 5' to the cleaved bond. This Equus caballus (Horse) protein is Replicase polyprotein 1ab (rep).